The primary structure comprises 205 residues: Holliday junction branch migration complex subunit RuvA (205 aa).

The domain I stretch occupies residues 1–62; it reads MFEYVTGYVE…EDIMALYGFK (62 aa). The domain II stretch occupies residues 63–141; that stretch reads TREERLLFTK…DVVPDAFVDL (79 aa). Positions 142–152 are flexible linker; it reads FSDTERFDEKK. The interval 153–205 is domain III; the sequence is GTSAELDEALEALRALGYAEREVSRVVPELLKESLTTDQYIKKALSLLLNGKR.

The protein belongs to the RuvA family. Homotetramer. Forms an RuvA(8)-RuvB(12)-Holliday junction (HJ) complex. HJ DNA is sandwiched between 2 RuvA tetramers; dsDNA enters through RuvA and exits via RuvB. An RuvB hexamer assembles on each DNA strand where it exits the tetramer. Each RuvB hexamer is contacted by two RuvA subunits (via domain III) on 2 adjacent RuvB subunits; this complex drives branch migration. In the full resolvosome a probable DNA-RuvA(4)-RuvB(12)-RuvC(2) complex forms which resolves the HJ.

Its subcellular location is the cytoplasm. Its function is as follows. The RuvA-RuvB-RuvC complex processes Holliday junction (HJ) DNA during genetic recombination and DNA repair, while the RuvA-RuvB complex plays an important role in the rescue of blocked DNA replication forks via replication fork reversal (RFR). RuvA specifically binds to HJ cruciform DNA, conferring on it an open structure. The RuvB hexamer acts as an ATP-dependent pump, pulling dsDNA into and through the RuvAB complex. HJ branch migration allows RuvC to scan DNA until it finds its consensus sequence, where it cleaves and resolves the cruciform DNA. The sequence is that of Holliday junction branch migration complex subunit RuvA from Bacillus cereus (strain G9842).